The sequence spans 504 residues: Probable periplasmic serine endoprotease DegP-like (504 aa).

An N-terminal signal peptide occupies residues 1-26 (MLKTTTVAGLAAVLLTTGLPAEVAQS). Residues 102-118 (RADRWRDRRGPRGEGRL) are compositionally biased toward basic and acidic residues. A disordered region spans residues 102 to 122 (RADRWRDRRGPRGEGRLRPRA). The serine protease stretch occupies residues 113–286 (RGEGRLRPRA…PASVAKDVVD (174 aa)). Residues H140, D170, and S244 each act as charge relay system in the active site. Substrate is bound by residues 242 to 244 (GNS) and 299 to 303 (LGVQI). 2 PDZ domains span residues 287–378 (SLIK…LWRS) and 401–491 (ATGE…IEAQ). Disordered regions lie at residues 389–411 (GTLP…DEGQ) and 428–447 (EDGK…AGDR).

It belongs to the peptidase S1C family.

The protein resides in the periplasm. The catalysed reaction is Acts on substrates that are at least partially unfolded. The cleavage site P1 residue is normally between a pair of hydrophobic residues, such as Val-|-Val.. Its function is as follows. Might be efficient in the degradation of transiently denatured and unfolded proteins which accumulate in the periplasm following stress conditions. The polypeptide is Probable periplasmic serine endoprotease DegP-like (degP1) (Rhizobium meliloti (strain 1021) (Ensifer meliloti)).